Here is a 215-residue protein sequence, read N- to C-terminus: HTH-type transcriptional regulator AcrR (215 aa).

Residues 10 to 70 (QETRQHILDV…EIWELSESNI (61 aa)) enclose the HTH tetR-type domain. Residues 33 to 52 (SLGEIAKAAGVTRGAIYWHF) constitute a DNA-binding region (H-T-H motif).

In terms of biological role, potential regulator protein for the acrAB genes. The sequence is that of HTH-type transcriptional regulator AcrR (acrR) from Shigella flexneri.